A 2093-amino-acid polypeptide reads, in one-letter code: Nuclear-pore anchor (2093 aa).

Coiled-coil stretches lie at residues 57 to 362 (LEQK…TDEL), 439 to 529 (MILQ…RDVQ), 570 to 627 (DING…RAEE), and 688 to 1172 (QEKA…LEAK). The tract at residues 1175–1198 (NSAEKNSRSGTISSGSTDSDHLED) is disordered. Residues 1182 to 1191 (RSGTISSGST) are compositionally biased toward low complexity. Coiled coils occupy residues 1208–1252 (LRRT…AERA) and 1293–1585 (EKCQ…LKHA). Disordered regions lie at residues 1453–1489 (YEKE…AVVE), 1525–1555 (KKDE…KKEK), and 1627–2093 (SNSQ…PSPP). A compositionally biased stretch (basic and acidic residues) spans 1470-1483 (QLEEAKEEAGKRTT). Polar residues predominate over residues 1652-1674 (STMTRVPSSTPLIKSPVATTQQL). Basic and acidic residues-rich tracts occupy residues 1710-1719 (KPEESPKVDV) and 1729-1740 (DEGKQPAAHEPE). Over residues 1764-1779 (SEPQQDSLTQGETSSE) the composition is skewed to polar residues. Residues 1789–1808 (KGSESHPDTSEGENLAKEPA) show a composition bias toward basic and acidic residues. Residues 1818–1849 (TTDGDNEETEAENAEEKTEEYVEAQQDNEADE) are a coiled coil. 2 stretches are compositionally biased toward acidic residues: residues 1821 to 1830 (GDNEETEAEN) and 1838 to 1903 (YVEA…EEGT). The span at 1921 to 1931 (TLATPTQSPSR) shows a compositional bias: polar residues. The span at 1935–1963 (AMEEAETTIETPVEDDKTDEGGDAAEEAA) shows a compositional bias: acidic residues. Residues 1984 to 2009 (TSAATTSPVSTAPTTSSTLASAITSS) show a composition bias toward low complexity. Ser-2022 bears the Phosphoserine mark.

In terms of assembly, part of the nuclear pore complex (NPC). The NPC has an eight-fold symmetrical structure comprising a central transport channel and two rings, the cytoplasmic and nuclear rings, to which eight filaments are attached. The cytoplasmic filaments have loose ends, while the nuclear filaments are joined in a distal ring, forming a nuclear basket. NPCs are highly dynamic in configuration and composition, and can be devided in 3 subcomplexes, the NUP62 subcomplex, the NUP107-160 subcomplex and the NUP93 subcomplex, containing approximately 30 different nucleoporin proteins. Interacts with MAD1 and (via N-terminus) with ESD4. As to expression, ubiquitous. Highest expression in the shoot apical region.

The protein resides in the nucleus envelope. The protein localises to the nucleus membrane. It is found in the nucleus. It localises to the nuclear pore complex. Functionally, component of the nuclear pore complex. Acts as a docking site for activities required for desumoylation and mRNA export. Required for the proper expression or localization of a subset of miRNAs. Plays a role in meristematic cell division by interacting with spindle assembly checkpoint proteins. This is Nuclear-pore anchor from Arabidopsis thaliana (Mouse-ear cress).